Consider the following 96-residue polypeptide: Keratin-associated protein 12-3 (96 aa).

Tandem repeats lie at residues Cys-10–Cys-14, Cys-15–Pro-19, Cys-24–Val-28, Cys-30–Val-34, Cys-35–Ser-39, Cys-45–Ser-49, Cys-50–Val-54, Cys-55–Ser-59, Cys-60–Ile-64, Cys-70–Gly-74, Cys-75–Pro-79, Cys-80–Leu-84, Cys-85–Ser-89, and Cys-90–Ser-94. Residues Cys-10–Ser-94 are 14 X 5 AA approximate repeats.

The protein belongs to the KRTAP type 12 family. In terms of assembly, interacts with hair keratins. In terms of tissue distribution, restricted to a narrow region of the hair fiber cuticle, lying approximately 20 cell layers above the apex of the dermal papilla of the hair root; not detected in any other tissues.

In terms of biological role, in the hair cortex, hair keratin intermediate filaments are embedded in an interfilamentous matrix, consisting of hair keratin-associated proteins (KRTAP), which are essential for the formation of a rigid and resistant hair shaft through their extensive disulfide bond cross-linking with abundant cysteine residues of hair keratins. The matrix proteins include the high-sulfur and high-glycine-tyrosine keratins. The chain is Keratin-associated protein 12-3 (KRTAP12-3) from Homo sapiens (Human).